We begin with the raw amino-acid sequence, 369 residues long: Putative agmatine deiminase (369 aa).

The active-site Amidino-cysteine intermediate is the cysteine 355.

Belongs to the agmatine deiminase family.

The enzyme catalyses agmatine + H2O = N-carbamoylputrescine + NH4(+). The sequence is that of Putative agmatine deiminase from Marinomonas sp. (strain MWYL1).